The following is a 234-amino-acid chain: Glutathione S-transferase U11 (234 aa).

Positions 11–90 constitute a GST N-terminal domain; sequence EYVKLLGAWP…YVDETWLSGP (80 aa). Glutathione contacts are provided by residues 21–22, 47–48, 61–62, and 74–75; these read SP, LS, QI, and ES. A GST C-terminal domain is found at 96–228; it reads DPFDRAVARF…KLVQFARLKF (133 aa).

Belongs to the GST superfamily. Tau family.

It is found in the cytoplasm. The protein resides in the cytosol. It carries out the reaction RX + glutathione = an S-substituted glutathione + a halide anion + H(+). Its function is as follows. May be involved in the conjugation of reduced glutathione to a wide number of exogenous and endogenous hydrophobic electrophiles and have a detoxification role against certain herbicides. This chain is Glutathione S-transferase U11 (GSTU11), found in Arabidopsis thaliana (Mouse-ear cress).